Here is a 407-residue protein sequence, read N- to C-terminus: Tyrosine--tRNA ligase (407 aa).

The 'HIGH' region motif lies at 47-56; it reads PTAPDLHLGA. The 'KMSKS' region signature appears at 231 to 235; that stretch reads KMSKS. Lys234 is an ATP binding site. The 62-residue stretch at 342–403 folds into the S4 RNA-binding domain; it reads PRLSQLLVQV…GKRHFARVAL (62 aa).

It belongs to the class-I aminoacyl-tRNA synthetase family. TyrS type 2 subfamily. As to quaternary structure, homodimer.

The protein localises to the cytoplasm. It carries out the reaction tRNA(Tyr) + L-tyrosine + ATP = L-tyrosyl-tRNA(Tyr) + AMP + diphosphate + H(+). Catalyzes the attachment of tyrosine to tRNA(Tyr) in a two-step reaction: tyrosine is first activated by ATP to form Tyr-AMP and then transferred to the acceptor end of tRNA(Tyr). The polypeptide is Tyrosine--tRNA ligase (Acidithiobacillus ferrooxidans (Thiobacillus ferrooxidans)).